Reading from the N-terminus, the 1711-residue chain is Hybrid PKS-NRPS synthetase TAS1 (1711 aa).

Positions 43 to 397 (APLSKMQRAL…RNGLNSEHRV (355 aa)) are condensation (C) domain. Residues 506-907 (QQQATLRPEQ…TVLLYGRINN (402 aa)) form an adenylation (A) domain region. In terms of domain architecture, Carrier 1 spans 1043–1119 (LEWAAAKARI…SQVGLVQSRR (77 aa)). S1079 carries the O-(pantetheine 4'-phosphoryl)serine modification. A compositionally biased stretch (polar residues) spans 1114–1127 (LVQSRRGSSGSPRT). Residues 1114–1159 (LVQSRRGSSGSPRTVRSHARPQRKAKTPPRQARPETPESDYDQLPD) form a disordered region. Residues 1128 to 1140 (VRSHARPQRKAKT) show a composition bias toward basic residues. One can recognise a Carrier 2 domain in the interval 1159–1236 (DLRDDVQQSI…AQVELLGRFT (78 aa)). S1195 is modified (O-(pantetheine 4'-phosphoryl)serine). The Ketosynthase family 3 (KS3) domain occupies 1266–1683 (REQYAIVGMS…GSTAHVVLSA (418 aa)). Active-site for beta-ketoacyl synthase activity residues include C1429, H1565, and N1608.

It in the N-terminal section; belongs to the NRP synthetase family. It depends on pantetheine 4'-phosphate as a cofactor.

The catalysed reaction is acetoacetyl-CoA + L-isoleucine + ATP = tenuazonic acid + AMP + diphosphate + CoA + 2 H(+). Its function is as follows. Hybrid PKS-NRPS synthetase that mediates the biosynthesis of the toxin tenuazonic acid (TeA), an inhibitor of protein biosynthesis on ribosomes by suppressing the release of new protein. TAS1 alone is sufficient for TeA synthesis via the condensation of isoleucine (Ile) with acetoacetyl-CoA by the N-terminal NRPS module and subsequent cyclization conducted by the C-terminal KS domain. The chain is Hybrid PKS-NRPS synthetase TAS1 from Botryobasidium botryosum (strain FD-172 SS1).